The chain runs to 243 residues: Beta-glucanase (243 aa).

The signal sequence occupies residues Met1–Ala27. Residues Ala29–Arg243 enclose the GH16 domain. Cysteines 61 and 90 form a disulfide. Glu134 (nucleophile) is an active-site residue. Catalysis depends on Glu138, which acts as the Proton donor.

Belongs to the glycosyl hydrolase 16 family.

The catalysed reaction is Hydrolysis of (1-&gt;4)-beta-D-glucosidic linkages in beta-D-glucans containing (1-&gt;3)- and (1-&gt;4)-bonds.. This is Beta-glucanase (bg1) from Bacillus licheniformis.